Consider the following 465-residue polypeptide: ATP synthase subunit beta (465 aa).

ATP is bound at residue 153-160; that stretch reads GGAGVGKT.

The protein belongs to the ATPase alpha/beta chains family. As to quaternary structure, F-type ATPases have 2 components, CF(1) - the catalytic core - and CF(0) - the membrane proton channel. CF(1) has five subunits: alpha(3), beta(3), gamma(1), delta(1), epsilon(1). CF(0) has three main subunits: a(1), b(2) and c(9-12). The alpha and beta chains form an alternating ring which encloses part of the gamma chain. CF(1) is attached to CF(0) by a central stalk formed by the gamma and epsilon chains, while a peripheral stalk is formed by the delta and b chains.

The protein resides in the cell membrane. The enzyme catalyses ATP + H2O + 4 H(+)(in) = ADP + phosphate + 5 H(+)(out). In terms of biological role, produces ATP from ADP in the presence of a proton gradient across the membrane. The catalytic sites are hosted primarily by the beta subunits. This chain is ATP synthase subunit beta, found in Clostridium perfringens (strain ATCC 13124 / DSM 756 / JCM 1290 / NCIMB 6125 / NCTC 8237 / Type A).